A 347-amino-acid chain; its full sequence is UPF0284 protein M164_0030 (347 aa).

It belongs to the UPF0284 family.

In Saccharolobus islandicus (strain M.16.4 / Kamchatka #3) (Sulfolobus islandicus), this protein is UPF0284 protein M164_0030.